The sequence spans 841 residues: Alpha-glucan phosphorylase 2, cytosolic (841 aa).

The disordered stretch occupies residues 1-24 (MANANGKAATSLPEKISAKANPEA). K687 is subject to N6-(pyridoxal phosphate)lysine.

It belongs to the glycogen phosphorylase family. The cofactor is pyridoxal 5'-phosphate.

It is found in the cytoplasm. It carries out the reaction [(1-&gt;4)-alpha-D-glucosyl](n) + phosphate = [(1-&gt;4)-alpha-D-glucosyl](n-1) + alpha-D-glucose 1-phosphate. Its function is as follows. Phosphorylase is an important allosteric enzyme in carbohydrate metabolism. Enzymes from different sources differ in their regulatory mechanisms and in their natural substrates. However, all known phosphorylases share catalytic and structural properties. The chain is Alpha-glucan phosphorylase 2, cytosolic (PHS2) from Arabidopsis thaliana (Mouse-ear cress).